Here is a 376-residue protein sequence, read N- to C-terminus: Proteasome-interacting protein CIC1 (376 aa).

Disordered regions lie at residues 1 to 29 (MAKKSNSKKSTPVSTPSKEKKKVIEKKSS) and 356 to 376 (RSSSELEKESSESEAVKKAKS). Positions 310-376 (ETHEDDMVTI…ESEAVKKAKS (67 aa)) are required for interaction with CDC4. A compositionally biased stretch (basic and acidic residues) spans 357-376 (SSSELEKESSESEAVKKAKS).

As to quaternary structure, interacts with CDC4, PRE4, PRE6, RPT1 and SCL1 as part of the fully assembled 26S proteasome. Interacts with pre-ribosomal particles constituent NOP7.

It is found in the nucleus. The protein resides in the nucleolus. An adapter protein that specifically links the 26S proteasome to its substrate CDC4 which is one of the substrate recognition subunits of the SCF E3 ubiquitin ligase complex. Required for turnover of cell cycle regulatory proteins CDC4 and GRR1. Required for synthesis and nuclear export of 60S ribosomal subunits. Required for vegetative growth. This is Proteasome-interacting protein CIC1 (CIC1) from Saccharomyces cerevisiae (strain ATCC 204508 / S288c) (Baker's yeast).